A 262-amino-acid polypeptide reads, in one-letter code: (2Z,6E)-farnesyl diphosphate synthase (262 aa).

D40 is a catalytic residue. D40 lines the Mg(2+) pocket. Substrate contacts are provided by residues 41–44, W45, and 86–88; these read GNRR and STE. N89 (proton acceptor) is an active-site residue. Residues R92, R211, and 217–219 each bind substrate; that span reads RLS. Residue E230 participates in Mg(2+) binding.

Belongs to the UPP synthase family. Z-FPP synthase subfamily. As to quaternary structure, homodimer. Requires Mg(2+) as cofactor.

It is found in the cytoplasm. Its subcellular location is the cell membrane. The catalysed reaction is isopentenyl diphosphate + (2E)-geranyl diphosphate = (2Z,6E)-farnesyl diphosphate + diphosphate. In terms of biological role, catalyzes the condensation of only one isopentenyl pyrophosphate (IPP) unit in the cis configuration to E-geranyl diphosphate (E-GPP) generating the 15 carbon product (2Z,6E)-farnesyl diphosphate (Z-FPP or EZ-FPP). Z-FPP is the precursor of decaprenyl diphosphate, which has a central role in the biosynthesis of the mycobacterial cell wall. The polypeptide is (2Z,6E)-farnesyl diphosphate synthase (Mycobacterium tuberculosis (strain CDC 1551 / Oshkosh)).